Reading from the N-terminus, the 278-residue chain is Small ribosomal subunit protein uS9m (278 aa).

The transit peptide at 1 to 10 directs the protein to the mitochondrion; sequence MFSRLSLFRR. Residues 259 to 278 are disordered; that stretch reads VERKKPGKKKARKMPTWVKR.

Belongs to the universal ribosomal protein uS9 family. In terms of assembly, component of the mitochondrial small ribosomal subunit (mt-SSU). Mature yeast 74S mitochondrial ribosomes consist of a small (37S) and a large (54S) subunit. The 37S small subunit contains a 15S ribosomal RNA (15S mt-rRNA) and 34 different proteins. The 54S large subunit contains a 21S rRNA (21S mt-rRNA) and 46 different proteins.

Its subcellular location is the mitochondrion. Functionally, component of the mitochondrial ribosome (mitoribosome), a dedicated translation machinery responsible for the synthesis of mitochondrial genome-encoded proteins, including at least some of the essential transmembrane subunits of the mitochondrial respiratory chain. The mitoribosomes are attached to the mitochondrial inner membrane and translation products are cotranslationally integrated into the membrane. This Saccharomyces cerevisiae (strain ATCC 204508 / S288c) (Baker's yeast) protein is Small ribosomal subunit protein uS9m (MRPS9).